A 126-amino-acid polypeptide reads, in one-letter code: 5-carboxymethyl-2-hydroxymuconate Delta-isomerase (126 aa).

Residue Pro-2 is the Proton acceptor; via imino nitrogen of the active site.

As to quaternary structure, homotrimer.

It carries out the reaction (2E,4Z)-5-hydroxypenta-2,4-diene-1,2,5-tricarboxylate = (3E,5R)-5-carboxy-2-oxohept-3-enedioate. It participates in aromatic compound metabolism; 4-hydroxyphenylacetate degradation; pyruvate and succinate semialdehyde from 4-hydroxyphenylacetate: step 4/7. Functionally, transforms 5-carboxymethyl-2-hydroxy-muconic acid (CHM) into 5-oxo-pent-3-ene-1,2,5-tricarboxylic acid (OPET). The protein is 5-carboxymethyl-2-hydroxymuconate Delta-isomerase (hpcD) of Escherichia coli.